The following is a 201-amino-acid chain: 3-isopropylmalate dehydratase small subunit (201 aa).

This sequence belongs to the LeuD family. LeuD type 1 subfamily. In terms of assembly, heterodimer of LeuC and LeuD.

It catalyses the reaction (2R,3S)-3-isopropylmalate = (2S)-2-isopropylmalate. It functions in the pathway amino-acid biosynthesis; L-leucine biosynthesis; L-leucine from 3-methyl-2-oxobutanoate: step 2/4. Its function is as follows. Catalyzes the isomerization between 2-isopropylmalate and 3-isopropylmalate, via the formation of 2-isopropylmaleate. The polypeptide is 3-isopropylmalate dehydratase small subunit (Afipia carboxidovorans (strain ATCC 49405 / DSM 1227 / KCTC 32145 / OM5) (Oligotropha carboxidovorans)).